Here is a 351-residue protein sequence, read N- to C-terminus: Protein-glutamate methylesterase/protein-glutamine glutaminase 1 (351 aa).

A Response regulatory domain is found at 1–115 (MVDDSAVVRQ…KQFLTESADE (115 aa)). 4-aspartylphosphate is present on aspartate 49. Positions 161 to 351 (AQTTERIVAI…MAREIVTQLQ (191 aa)) constitute a CheB-type methylesterase domain. Catalysis depends on residues serine 173, histidine 199, and aspartate 295.

Belongs to the CheB family. Post-translationally, phosphorylated by CheA. Phosphorylation of the N-terminal regulatory domain activates the methylesterase activity.

It localises to the cytoplasm. It catalyses the reaction [protein]-L-glutamate 5-O-methyl ester + H2O = L-glutamyl-[protein] + methanol + H(+). The catalysed reaction is L-glutaminyl-[protein] + H2O = L-glutamyl-[protein] + NH4(+). Its function is as follows. Involved in chemotaxis. Part of a chemotaxis signal transduction system that modulates chemotaxis in response to various stimuli. Catalyzes the demethylation of specific methylglutamate residues introduced into the chemoreceptors (methyl-accepting chemotaxis proteins or MCP) by CheR. Also mediates the irreversible deamidation of specific glutamine residues to glutamic acid. The sequence is that of Protein-glutamate methylesterase/protein-glutamine glutaminase 1 from Xanthomonas oryzae pv. oryzae (strain MAFF 311018).